Consider the following 315-residue polypeptide: Putative olfactory receptor 2I1 (315 aa).

At 1-24 (MKANYSAEERFLLLGFSDWPSLQP) the chain is on the extracellular side. Residues 25–48 (VLFALVLLCYLLTLTGNSALVLLA) form a helical membrane-spanning segment. The Cytoplasmic segment spans residues 49 to 56 (VRDPRLHT). Residues 57–78 (PMYYFLCHLALVDAGFTTSVVP) traverse the membrane as a helical segment. Over 79–99 (PLLANLRGPALWLPRSHCTAQ) the chain is Extracellular. A disulfide bridge links C96 with C188. Residues 100–119 (LCASLALGSAECVLLAVMAL) traverse the membrane as a helical segment. Residues 120 to 138 (DRAAAVCRPLRYAGLVSPR) are Cytoplasmic-facing. A helical membrane pass occupies residues 139-157 (LCRTLASASWLSGLTNSVA). Over 158-195 (QTALLAERPLCAPRLLDHFICELPALLKLACGGDGDTT) the chain is Extracellular. A helical transmembrane segment spans residues 196–219 (ENQMFAARVVILLLPFAVILASYG). The Cytoplasmic segment spans residues 220–236 (AVARAVCCMRFSGGRRR). A helical transmembrane segment spans residues 237–259 (AVGTCGSHLTAVCLFYGSAIYTY). Residues 260–272 (LQPAQRYNQARGK) lie on the Extracellular side of the membrane. A helical membrane pass occupies residues 273–292 (FVSLFYTVVTPALNPLIYTL). At 293 to 315 (RNKKVKGAARRLLRSLGRGQAGQ) the chain is on the cytoplasmic side.

The protein belongs to the G-protein coupled receptor 1 family.

It is found in the cell membrane. Its function is as follows. Odorant receptor. The polypeptide is Putative olfactory receptor 2I1 (Homo sapiens (Human)).